Here is a 235-residue protein sequence, read N- to C-terminus: MAKELIYSGKAKDILTTEDENVIIAQYKDQATALNGVKKEQIAGKGQLNNQISSLIFQKLNAAGVATHFIKKISETEQLNKKVKIIPLEVVLRNVTAGSFSKRFGVKEGIQLEKPIVEFYYKNDDLDDPFINDEHVKFLKLANDEDIAYIKAETRRINKLLSDWFHQIGLKLIDFKLEFGFDKDGKIILADEFSPDNCRLWDAQGHHMDKDVFRRGLGELTDVYEVVWEKLQELK.

The protein belongs to the SAICAR synthetase family.

The enzyme catalyses 5-amino-1-(5-phospho-D-ribosyl)imidazole-4-carboxylate + L-aspartate + ATP = (2S)-2-[5-amino-1-(5-phospho-beta-D-ribosyl)imidazole-4-carboxamido]succinate + ADP + phosphate + 2 H(+). The protein operates within purine metabolism; IMP biosynthesis via de novo pathway; 5-amino-1-(5-phospho-D-ribosyl)imidazole-4-carboxamide from 5-amino-1-(5-phospho-D-ribosyl)imidazole-4-carboxylate: step 1/2. The polypeptide is Phosphoribosylaminoimidazole-succinocarboxamide synthase (Streptococcus mutans serotype c (strain ATCC 700610 / UA159)).